Here is a 549-residue protein sequence, read N- to C-terminus: Glucose-6-phosphate isomerase (549 aa).

Glu-355 (proton donor) is an active-site residue. Active-site residues include His-386 and Lys-514.

Belongs to the GPI family.

It is found in the cytoplasm. It carries out the reaction alpha-D-glucose 6-phosphate = beta-D-fructose 6-phosphate. The protein operates within carbohydrate biosynthesis; gluconeogenesis. It functions in the pathway carbohydrate degradation; glycolysis; D-glyceraldehyde 3-phosphate and glycerone phosphate from D-glucose: step 2/4. Catalyzes the reversible isomerization of glucose-6-phosphate to fructose-6-phosphate. The sequence is that of Glucose-6-phosphate isomerase from Salmonella paratyphi B (strain ATCC BAA-1250 / SPB7).